Here is a 69-residue protein sequence, read N- to C-terminus: Alpha-elapitoxin-Lc2c (69 aa).

4 cysteine pairs are disulfide-bonded: C3–C20, C13–C41, C45–C56, and C57–C62.

The protein belongs to the three-finger toxin family. Long-chain subfamily. Type II alpha-neurotoxin sub-subfamily. In terms of tissue distribution, expressed by the venom gland.

It is found in the secreted. In terms of biological role, binds with high affinity to muscular nicotinic acetylcholine receptors (nAChRs), whereas it binds with a low affinity to neuronal alpha-7/CHRNA7 nAChRs. This Laticauda colubrina (Yellow-lipped sea krait) protein is Alpha-elapitoxin-Lc2c.